Reading from the N-terminus, the 293-residue chain is N-acetylneuraminate lyase (293 aa).

Aceneuramate is bound by residues Ser-48 and Ser-49. Residue Tyr-137 is the Proton donor of the active site. Lys-165 serves as the catalytic Schiff-base intermediate with substrate. Aceneuramate is bound by residues Thr-167, Gly-189, Asp-191, Glu-192, and Ser-208.

It belongs to the DapA family. NanA subfamily. As to quaternary structure, homotetramer.

It is found in the cytoplasm. It catalyses the reaction aceneuramate = aldehydo-N-acetyl-D-mannosamine + pyruvate. The protein operates within amino-sugar metabolism; N-acetylneuraminate degradation; D-fructose 6-phosphate from N-acetylneuraminate: step 1/5. Its function is as follows. Catalyzes the reversible aldol cleavage of N-acetylneuraminic acid (sialic acid; Neu5Ac) to form pyruvate and N-acetylmannosamine (ManNAc) via a Schiff base intermediate. The chain is N-acetylneuraminate lyase from Staphylococcus aureus (strain bovine RF122 / ET3-1).